We begin with the raw amino-acid sequence, 627 residues long: Threonine--tRNA ligase (627 aa).

The interval 221-523 (DHRKLGRELG…LIEHFAGDFP (303 aa)) is catalytic. Zn(2+)-binding residues include Cys319, His370, and His500.

Belongs to the class-II aminoacyl-tRNA synthetase family. In terms of assembly, homodimer. It depends on Zn(2+) as a cofactor.

It is found in the cytoplasm. The catalysed reaction is tRNA(Thr) + L-threonine + ATP = L-threonyl-tRNA(Thr) + AMP + diphosphate + H(+). Its function is as follows. Catalyzes the attachment of threonine to tRNA(Thr) in a two-step reaction: L-threonine is first activated by ATP to form Thr-AMP and then transferred to the acceptor end of tRNA(Thr). Also edits incorrectly charged L-seryl-tRNA(Thr). This is Threonine--tRNA ligase from Gloeobacter violaceus (strain ATCC 29082 / PCC 7421).